The following is a 110-amino-acid chain: Large ribosomal subunit protein P2B (110 aa).

Over residues 73–88 (TPAAGGAAGAEATSAA) the composition is skewed to low complexity. The interval 73 to 110 (TPAAGGAAGAEATSAAEEAKEEEAAEESDEDMGFGLFD) is disordered. Positions 91–104 (AKEEEAAEESDEDM) are enriched in acidic residues. S100 carries the phosphoserine modification.

Belongs to the eukaryotic ribosomal protein P1/P2 family. Component of the large ribosomal subunit (LSU). Mature yeast ribosomes consist of a small (40S) and a large (60S) subunit. The 40S small subunit contains 1 molecule of ribosomal RNA (18S rRNA) and at least 33 different proteins. The large 60S subunit contains 3 rRNA molecules (25S, 5.8S and 5S rRNA) and at least 46 different proteins. The acidic ribosomal P-proteins form the stalk structure of the 60S subunit. They are organized as a pentameric complex in which uL10/P0 interacts with 2 heterodimers of P1 and P2 proteins.

It is found in the cytoplasm. Its function is as follows. Component of the ribosome, a large ribonucleoprotein complex responsible for the synthesis of proteins in the cell. The small ribosomal subunit (SSU) binds messenger RNAs (mRNAs) and translates the encoded message by selecting cognate aminoacyl-transfer RNA (tRNA) molecules. The large subunit (LSU) contains the ribosomal catalytic site termed the peptidyl transferase center (PTC), which catalyzes the formation of peptide bonds, thereby polymerizing the amino acids delivered by tRNAs into a polypeptide chain. The nascent polypeptides leave the ribosome through a tunnel in the LSU and interact with protein factors that function in enzymatic processing, targeting, and the membrane insertion of nascent chains at the exit of the ribosomal tunnel. In Schizosaccharomyces pombe (strain 972 / ATCC 24843) (Fission yeast), this protein is Large ribosomal subunit protein P2B (rpp202).